Here is a 302-residue protein sequence, read N- to C-terminus: uncharacterized protein (302 aa).

The S4 RNA-binding domain occupies 19–90; it reads QWLFSVLKTA…GELDILFEDN (72 aa). Residue Asp-138 is part of the active site. Residues 182 to 205 form a disordered region; it reads KGTINSPIGRDRSHPTRRRVSPGG.

This sequence belongs to the pseudouridine synthase RluA family.

It catalyses the reaction a uridine in RNA = a pseudouridine in RNA. This is an uncharacterized protein from Bacillus subtilis (strain 168).